Here is a 132-residue protein sequence, read N- to C-terminus: Fatty acid-binding protein, intestinal (132 aa).

Alanine 2 carries the N-acetylalanine modification. Tryptophan 83 and arginine 107 together coordinate hexadecanoate. The tetradecanoate site is built by tryptophan 83 and arginine 107.

It belongs to the calycin superfamily. Fatty-acid binding protein (FABP) family. In terms of tissue distribution, expressed in the small intestine and at much lower levels in the large intestine. Highest expression levels in the jejunum.

It is found in the cytoplasm. FABPs are thought to play a role in the intracellular transport of long-chain fatty acids and their acyl-CoA esters. FABP2 is probably involved in triglyceride-rich lipoprotein synthesis. Binds saturated long-chain fatty acids with a high affinity, but binds with a lower affinity to unsaturated long-chain fatty acids. FABP2 may also help maintain energy homeostasis by functioning as a lipid sensor. In Homo sapiens (Human), this protein is Fatty acid-binding protein, intestinal (FABP2).